Consider the following 540-residue polypeptide: MINTILVPVAVAIVSVLVGGCAGYSLRKNKWETQAQNAAHDAKHILADAESKAKAVEADLASQQEAMKKAAADAKKEKILEAQEEIHHYRERVDNELNERRQEVSRQENRLLQREDAIDHKDSLLDQKDSQLTQKENQIKKLQAQVLEKEKRADQLVTEREQKLYEVAELSQEDAKKIVLDKLSDQLVKERAEMIEESNQLAKAKADHFARKVIVDAIQSSAADTVSEKTVSVVNLPNDDMKGRIIGREGRNIRSFEALTGVDVIIDDTPDVVVLSGFDPIRREIAKRALERLIKDGRIHPARIEEMVDRARKEVNDDIYEAGESALMELGIHKMHPELVKILGRLKYRTSYGQNVLSHSIEVGKLTGVMAAELGLDEKIAVRAGLLHDIGKSIDHEIEGSHVEIGVELARKYHEPDLVVNAIAAHHDDVPKLSFIAELVVAADTISSARPGARSESLENYIRRLEQLETIAKGHIGVKQAYAIQAGREIRVMVEPDKISDARTTILAHDIKNQIEQDMEYPGNIKVTVIREKRAVAIAK.

The helical transmembrane segment at 4–24 threads the bilayer; that stretch reads TILVPVAVAIVSVLVGGCAGY. The region spanning 230 to 293 is the KH domain; it reads TVSVVNLPND…EIAKRALERL (64 aa). In terms of domain architecture, HD spans 356 to 449; it reads VLSHSIEVGK…VVAADTISSA (94 aa).

The protein belongs to the RNase Y family.

It is found in the cell membrane. Functionally, endoribonuclease that initiates mRNA decay. The protein is Ribonuclease Y of Lactobacillus gasseri (strain ATCC 33323 / DSM 20243 / BCRC 14619 / CIP 102991 / JCM 1131 / KCTC 3163 / NCIMB 11718 / NCTC 13722 / AM63).